The following is a 479-amino-acid chain: tRNA-2-methylthio-N(6)-dimethylallyladenosine synthase (479 aa).

Residues K6–S122 enclose the MTTase N-terminal domain. C15, C51, C85, C172, C176, and C179 together coordinate [4Fe-4S] cluster. In terms of domain architecture, Radical SAM core spans R158–E390. Residues Q393–T464 form the TRAM domain.

The protein belongs to the methylthiotransferase family. MiaB subfamily. Monomer. The cofactor is [4Fe-4S] cluster.

The protein resides in the cytoplasm. The enzyme catalyses N(6)-dimethylallyladenosine(37) in tRNA + (sulfur carrier)-SH + AH2 + 2 S-adenosyl-L-methionine = 2-methylsulfanyl-N(6)-dimethylallyladenosine(37) in tRNA + (sulfur carrier)-H + 5'-deoxyadenosine + L-methionine + A + S-adenosyl-L-homocysteine + 2 H(+). In terms of biological role, catalyzes the methylthiolation of N6-(dimethylallyl)adenosine (i(6)A), leading to the formation of 2-methylthio-N6-(dimethylallyl)adenosine (ms(2)i(6)A) at position 37 in tRNAs that read codons beginning with uridine. The sequence is that of tRNA-2-methylthio-N(6)-dimethylallyladenosine synthase from Rhodopirellula baltica (strain DSM 10527 / NCIMB 13988 / SH1).